The primary structure comprises 606 residues: Glutamine--fructose-6-phosphate aminotransferase [isomerizing] (606 aa).

The active-site Nucleophile; for GATase activity is the cysteine 2. Positions 2-218 constitute a Glutamine amidotransferase type-2 domain; the sequence is CGIFGYLGQR…SGELAVLRIG (217 aa). 2 SIS domains span residues 278–424 and 455–596; these read FAES…QRQE and WRCR…VDRP. The For Fru-6P isomerization activity role is filled by lysine 601.

Homodimer.

It localises to the cytoplasm. The catalysed reaction is D-fructose 6-phosphate + L-glutamine = D-glucosamine 6-phosphate + L-glutamate. Catalyzes the first step in hexosamine metabolism, converting fructose-6P into glucosamine-6P using glutamine as a nitrogen source. The sequence is that of Glutamine--fructose-6-phosphate aminotransferase [isomerizing] from Chlamydia muridarum (strain MoPn / Nigg).